A 183-amino-acid polypeptide reads, in one-letter code: MKVKFLGSFFEEFPPPDYPEVVFVGRSNVGKSSLLNMVVGSKVAKVSKTPGRTRAVNYFLLDKKLYLVDVPGYGYAKVGREEMEKWRKMMERYFKERKDNIKMAFLLIDAVAGVQPLDEQMIEWFEYYGIPFTVVITKIDKASQSEIAKTLKQVKRYVGDGAIVLSSAKEGKGKKELLSRILN.

The EngB-type G domain maps to Asp-17–Asn-183. GTP-binding positions include Gly-25–Ser-32, Gly-51–Ala-55, Asp-69–Gly-72, Thr-137–Asp-140, and Ser-166–Ala-168. Ser-32 and Thr-53 together coordinate Mg(2+).

Belongs to the TRAFAC class TrmE-Era-EngA-EngB-Septin-like GTPase superfamily. EngB GTPase family. Mg(2+) serves as cofactor.

Its function is as follows. Necessary for normal cell division and for the maintenance of normal septation. The chain is Probable GTP-binding protein EngB from Aquifex aeolicus (strain VF5).